The following is a 393-amino-acid chain: S-adenosylmethionine synthase (393 aa).

ATP is bound at residue histidine 17. Aspartate 19 provides a ligand contact to Mg(2+). Glutamate 45 contributes to the K(+) binding site. Residues glutamate 58 and glutamine 106 each coordinate L-methionine. A flexible loop region spans residues 106 to 116 (QSAHIAQGVDA). Residues 171-173 (DAK), 237-238 (KF), aspartate 246, 252-253 (RK), alanine 269, and lysine 273 each bind ATP. Aspartate 246 contacts L-methionine. Lysine 277 serves as a coordination point for L-methionine.

The protein belongs to the AdoMet synthase family. As to quaternary structure, homotetramer; dimer of dimers. The cofactor is Mg(2+). K(+) is required as a cofactor.

The protein localises to the cytoplasm. The enzyme catalyses L-methionine + ATP + H2O = S-adenosyl-L-methionine + phosphate + diphosphate. It participates in amino-acid biosynthesis; S-adenosyl-L-methionine biosynthesis; S-adenosyl-L-methionine from L-methionine: step 1/1. In terms of biological role, catalyzes the formation of S-adenosylmethionine (AdoMet) from methionine and ATP. The overall synthetic reaction is composed of two sequential steps, AdoMet formation and the subsequent tripolyphosphate hydrolysis which occurs prior to release of AdoMet from the enzyme. The polypeptide is S-adenosylmethionine synthase (Ruegeria sp. (strain TM1040) (Silicibacter sp.)).